We begin with the raw amino-acid sequence, 313 residues long: Glutathionyl-hydroquinone reductase PcpF (313 aa).

Cysteine 53 acts as the Nucleophile in catalysis. Residues tryptophan 86, 119-122 (RVTI), and 137-138 (ES) each bind glutathione. The 125-residue stretch at 161-285 (PAEFRPEIDR…INLRHAKAHY (125 aa)) folds into the GST C-terminal domain. Residue tyrosine 184 is the Proton donor/acceptor of the active site.

The protein belongs to the GST superfamily. Xi-class GSH transferase family. Homodimer.

The enzyme catalyses 2-(glutathione-S-yl)-hydroquinone + glutathione = hydroquinone + glutathione disulfide. Functionally, catalyzes glutathione (GSH)-dependent reduction of glutathionyl-hydroquinones (GS-HQs) to the corresponding hydroquinones. Can act on halogenated substrates such as GS-2,6-dichloro-p-hydroquinone (GS-DiCH) and GS-trichloro-p-hydroquinone (GS-TriCH). Involved in the degradation of pentachlorophenol (PCP), a toxic pollutant. The sequence is that of Glutathionyl-hydroquinone reductase PcpF from Sphingobium chlorophenolicum.